The primary structure comprises 211 residues: 2,3-bisphosphoglycerate-dependent phosphoglycerate mutase (211 aa).

Residues 9-16 (RHGQSDWN), 22-23 (TG), Arg-61, 88-91 (ERDY), Lys-99, 115-116 (RR), and 159-160 (GN) contribute to the substrate site. The active-site Tele-phosphohistidine intermediate is His-10. The active-site Proton donor/acceptor is Glu-88.

Belongs to the phosphoglycerate mutase family. BPG-dependent PGAM subfamily. In terms of assembly, homodimer.

It catalyses the reaction (2R)-2-phosphoglycerate = (2R)-3-phosphoglycerate. Its pathway is carbohydrate degradation; glycolysis; pyruvate from D-glyceraldehyde 3-phosphate: step 3/5. Catalyzes the interconversion of 2-phosphoglycerate and 3-phosphoglycerate. This Rhizobium johnstonii (strain DSM 114642 / LMG 32736 / 3841) (Rhizobium leguminosarum bv. viciae) protein is 2,3-bisphosphoglycerate-dependent phosphoglycerate mutase.